The chain runs to 463 residues: Quinolone resistance protein NorB (463 aa).

The next 14 membrane-spanning stretches (helical) occupy residues 17-37 (IGIV…VNVV), 53-73 (IAVS…GGLA), 86-106 (IILN…LLLI), 107-127 (IGRL…LSII), 142-162 (YWSI…GAVA), 165-185 (LGWR…LFLI), 201-221 (FDIK…ILIT), 230-250 (SLLF…FIVL), 273-293 (TASN…NTFV), 299-319 (YSSL…LIMI), 334-354 (PMLI…LTFL), 357-377 (IFYV…LGIY), 403-423 (MASA…YAIV), and 435-455 (IALW…LLLV).

The protein belongs to the major facilitator superfamily. TCR/Tet family.

The protein localises to the cell membrane. In terms of biological role, multidrug efflux pump that acts independently of NorA and is one of the factors that confers resistance against diverse quinolones and chemical compounds. This Staphylococcus aureus (strain USA300) protein is Quinolone resistance protein NorB (norB).